We begin with the raw amino-acid sequence, 183 residues long: uncharacterized protein (183 aa).

This is an uncharacterized protein from Methanocaldococcus jannaschii (strain ATCC 43067 / DSM 2661 / JAL-1 / JCM 10045 / NBRC 100440) (Methanococcus jannaschii).